The primary structure comprises 839 residues: Protein translocase subunit SecA (839 aa).

ATP contacts are provided by residues Gln-86, 104-108, and Asp-493; that span reads GEGKT. The interval 794-839 is disordered; it reads GIDMDNLQTSGPSDRPDPETSGDADPKNRAQRRAQEQERKRQNKKQ. Basic and acidic residues predominate over residues 807 to 833; the sequence is DRPDPETSGDADPKNRAQRRAQEQERK.

This sequence belongs to the SecA family. As to quaternary structure, monomer and homodimer. Part of the essential Sec protein translocation apparatus which comprises SecA, SecYEG and auxiliary proteins SecDF. Other proteins may also be involved.

It localises to the cell membrane. The protein resides in the cytoplasm. It catalyses the reaction ATP + H2O + cellular proteinSide 1 = ADP + phosphate + cellular proteinSide 2.. Its function is as follows. Part of the Sec protein translocase complex. Interacts with the SecYEG preprotein conducting channel. Has a central role in coupling the hydrolysis of ATP to the transfer of proteins into and across the cell membrane, serving as an ATP-driven molecular motor driving the stepwise translocation of polypeptide chains across the membrane. The sequence is that of Protein translocase subunit SecA from Brevibacillus brevis (strain 47 / JCM 6285 / NBRC 100599).